Consider the following 336-residue polypeptide: Dual specificity mitogen-activated protein kinase kinase sek-1 (336 aa).

Residues 50 to 311 (LVVLEELGKG…YPELLAMPFM (262 aa)) form the Protein kinase domain. ATP is bound by residues 56 to 64 (LGKGGYGIV) and Lys79. The active-site Proton acceptor is the Asp176. Ser204 carries the post-translational modification Phosphoserine. The residue at position 208 (Thr208) is a Phosphothreonine.

It belongs to the protein kinase superfamily. STE Ser/Thr protein kinase family. MAP kinase kinase subfamily. Interacts with nsy-1. Interacts with unc-16. Mg(2+) is required as a cofactor. Expressed in linker cell in males.

It carries out the reaction L-seryl-[protein] + ATP = O-phospho-L-seryl-[protein] + ADP + H(+). The enzyme catalyses L-threonyl-[protein] + ATP = O-phospho-L-threonyl-[protein] + ADP + H(+). The catalysed reaction is L-tyrosyl-[protein] + ATP = O-phospho-L-tyrosyl-[protein] + ADP + H(+). With respect to regulation, activated by nsy-1-mediated phosphorylation. Dual specificity protein kinase which acts as an essential component of the p38 signal transduction pathway which is also composed of upstream effector nsy-1 and downstream effector pmk-1. May phosphorylate pmk-1. Downstream of CaMKII unc-43 and adapter protein tir-1, plays a role in determining asymmetric cell fates in olfactory AWC neurons during neuronal development. Activation results in the repression of odorant receptor str-2 expression in one of the 2 AWC neurons. Involved in resistance to pathogenic Gram-positive and Gram-negative bacterial and fungal infection. Involved in resistance to the nematotoxic C.cinerea galectin Cgl2. Probably by promoting pmk-1-mediated activation of skn-1, involved in the up-regulation of gcs-1 and glutathione-S-transferase gst-4 expression upon bacterial infection. Probably downstream of tir-1, required for the expression of antimicrobial peptide nlp-29 in the epidermis in response to fungal infection or physical injury. Regulates susceptibility of B.thuringiensis pore-forming toxin Cry5B and Cry21A. Involved in the response to oxidative stress. May regulate transcription factor daf-16 localization during oxidative stress. By phosphorylating pmk-1, regulates skn-1 localization during oxidative stress. By phosphorylating and activating pmk-1, plays a role in the stabilization of transcription factor rnt-1 in the intestine during oxidative stress. Up-regulates expression of gcs-1 in intestine upon arsenite treatment. Regulates germline proliferation in response to osmotic stress, starvation and germline apoptosis induced by heavy metals, such as Cu(2+). In association with mek-1, regulates germline cell apoptosis in response to oxidative, osmotic and heat shock stresses. Plays a role downstream of tir-1/nsy-1 in regulating susceptibility to anoxia. In males, by regulating pqn-41 expression, involved in non-apoptotic death of the linker cell which guides gonad elongation during larval development. Involved in egg laying. This chain is Dual specificity mitogen-activated protein kinase kinase sek-1, found in Caenorhabditis elegans.